The primary structure comprises 222 residues: Deoxyribose-phosphate aldolase (222 aa).

The Proton donor/acceptor role is filled by Asp-91. The active-site Schiff-base intermediate with acetaldehyde is the Lys-153. Lys-182 functions as the Proton donor/acceptor in the catalytic mechanism.

It belongs to the DeoC/FbaB aldolase family. DeoC type 1 subfamily.

The protein localises to the cytoplasm. It catalyses the reaction 2-deoxy-D-ribose 5-phosphate = D-glyceraldehyde 3-phosphate + acetaldehyde. It functions in the pathway carbohydrate degradation; 2-deoxy-D-ribose 1-phosphate degradation; D-glyceraldehyde 3-phosphate and acetaldehyde from 2-deoxy-alpha-D-ribose 1-phosphate: step 2/2. In terms of biological role, catalyzes a reversible aldol reaction between acetaldehyde and D-glyceraldehyde 3-phosphate to generate 2-deoxy-D-ribose 5-phosphate. In Mycoplasma capricolum subsp. capricolum (strain California kid / ATCC 27343 / NCTC 10154), this protein is Deoxyribose-phosphate aldolase.